A 362-amino-acid chain; its full sequence is MTKPTEDDPKGISRRPAAFSLEQEASREGAHTKTTAETPRRKPQSFDTEIVLTPDEEDPFLNPALTASDAEAAIAAPRRRRFSFGKVALSAFGILVSLAFGLWTDELIRNLFSRADWLGYTALTVLAIGILAVLAIVVRETAGMMRLAAVQTIKAEADAAVVETRPARAKALVQRLCTLLEANPATAKGRATLKAAEDDIIDAPHLIDLAERELLGPLDRSARVLILGASKRVSVVTAVSPRALVDILYVLYESAKLVRAMAELYGGRPGGLGMLKLMRDVLAHLAVTGSIAVGDSIVQQLIGHGLASKLSARLGEGVVNGMMTARIGIAAMDLCRPLSFKALKRPGIGDFVGDLAPNITGR.

Residues 1–11 (MTKPTEDDPKG) are compositionally biased toward basic and acidic residues. Positions 1–47 (MTKPTEDDPKGISRRPAAFSLEQEASREGAHTKTTAETPRRKPQSFD) are disordered. The next 2 helical transmembrane spans lie at 82–102 (FSFGKVALSAFGILVSLAFGL) and 118–138 (LGYTALTVLAIGILAVLAIVV).

The protein belongs to the UPF0283 family.

It is found in the cell inner membrane. This Rhizobium rhizogenes (strain K84 / ATCC BAA-868) (Agrobacterium radiobacter) protein is UPF0283 membrane protein Arad_2632.